A 206-amino-acid polypeptide reads, in one-letter code: Ras-related protein Rab7 (206 aa).

GTP is bound by residues 15 to 22 (GDSGVGKT), 63 to 67 (DTAGQ), and 125 to 128 (NKVD). S-geranylgeranyl cysteine attachment occurs at residues Cys205 and Cys206.

The protein belongs to the small GTPase superfamily. Rab family.

Its subcellular location is the cell membrane. Functionally, protein transport. Probably involved in vesicular traffic. This is Ras-related protein Rab7 from Cenchrus ciliaris (Buffelgrass).